The chain runs to 823 residues: Probable inorganic carbon transporter subunit DabA (823 aa).

Cys-361, Asp-363, His-527, and Cys-542 together coordinate Zn(2+).

This sequence belongs to the inorganic carbon transporter (TC 9.A.2) DabA family. As to quaternary structure, forms a complex with DabB. Requires Zn(2+) as cofactor.

It localises to the cell inner membrane. Intracellular DIC accumulation is sensitive to CCCP (carbonyl cyanide-m-chlorophenylhydrazone) and DCCD (N,N-dicyclohexylcarbodiimide) and therefore likely driven by either proton potential, ATP, or both. Functionally, part of an energy-coupled inorganic carbon pump. Its function is as follows. Probably involved in transport of dissolved inorganic carbon (DIC) with upstream gene dabB (Tcr_0853); has been suggested to be a proton-DIC symporter. The protein is Probable inorganic carbon transporter subunit DabA of Hydrogenovibrio crunogenus (strain DSM 25203 / XCL-2) (Thiomicrospira crunogena).